The primary structure comprises 234 residues: MPIHDWPEQERPREKLIARGPTALSDAELLALFLGSGFGGRDAVQTARDLLQAHGPLRVLLDRPAAELARLPGLGPARSCTLAAGLELAHRYLAAELEHGEAVGNNPAAVGRYLQHRLRGQAREVFMALFLDNRHRLIACEELFHGTINAAPVYPREVVRRALLHNAAAVILSHNHPSGDPEPSSADTRITDELQQALAMVDVRLLDHFVVGEGRPVSFAERGLLSPPQPRLFG.

Residues 103 to 225 enclose the MPN domain; the sequence is VGNNPAAVGR…PVSFAERGLL (123 aa). Positions 174, 176, and 187 each coordinate Zn(2+). The JAMM motif signature appears at 174–187; it reads HNHPSGDPEPSSAD.

Belongs to the UPF0758 family.

The chain is UPF0758 protein Smlt0399 from Stenotrophomonas maltophilia (strain K279a).